The sequence spans 438 residues: Serine--tRNA ligase (438 aa).

An L-serine-binding site is contributed by 245–247 (TAE). 276–278 (RSE) serves as a coordination point for ATP. Glu299 contributes to the L-serine binding site. 363–366 (EISS) is a binding site for ATP. Ser398 provides a ligand contact to L-serine.

This sequence belongs to the class-II aminoacyl-tRNA synthetase family. Type-1 seryl-tRNA synthetase subfamily. Homodimer. The tRNA molecule binds across the dimer.

Its subcellular location is the cytoplasm. It carries out the reaction tRNA(Ser) + L-serine + ATP = L-seryl-tRNA(Ser) + AMP + diphosphate + H(+). The enzyme catalyses tRNA(Sec) + L-serine + ATP = L-seryl-tRNA(Sec) + AMP + diphosphate + H(+). The protein operates within aminoacyl-tRNA biosynthesis; selenocysteinyl-tRNA(Sec) biosynthesis; L-seryl-tRNA(Sec) from L-serine and tRNA(Sec): step 1/1. Catalyzes the attachment of serine to tRNA(Ser). Is also able to aminoacylate tRNA(Sec) with serine, to form the misacylated tRNA L-seryl-tRNA(Sec), which will be further converted into selenocysteinyl-tRNA(Sec). The protein is Serine--tRNA ligase of Delftia acidovorans (strain DSM 14801 / SPH-1).